Reading from the N-terminus, the 57-residue chain is Large ribosomal subunit protein bL33 (57 aa).

This sequence belongs to the bacterial ribosomal protein bL33 family.

This Shewanella pealeana (strain ATCC 700345 / ANG-SQ1) protein is Large ribosomal subunit protein bL33.